A 239-amino-acid polypeptide reads, in one-letter code: 1-(5-phosphoribosyl)-5-[(5-phosphoribosylamino)methylideneamino] imidazole-4-carboxamide isomerase (239 aa).

The active-site Proton acceptor is aspartate 9. The active-site Proton donor is the aspartate 131.

The protein belongs to the HisA/HisF family.

Its subcellular location is the cytoplasm. It catalyses the reaction 1-(5-phospho-beta-D-ribosyl)-5-[(5-phospho-beta-D-ribosylamino)methylideneamino]imidazole-4-carboxamide = 5-[(5-phospho-1-deoxy-D-ribulos-1-ylimino)methylamino]-1-(5-phospho-beta-D-ribosyl)imidazole-4-carboxamide. It participates in amino-acid biosynthesis; L-histidine biosynthesis; L-histidine from 5-phospho-alpha-D-ribose 1-diphosphate: step 4/9. In Phocaeicola vulgatus (strain ATCC 8482 / DSM 1447 / JCM 5826 / CCUG 4940 / NBRC 14291 / NCTC 11154) (Bacteroides vulgatus), this protein is 1-(5-phosphoribosyl)-5-[(5-phosphoribosylamino)methylideneamino] imidazole-4-carboxamide isomerase.